Reading from the N-terminus, the 577-residue chain is Arginine--tRNA ligase (577 aa).

A 'HIGH' region motif is present at residues 122 to 132 (PNVAKEMHVGH).

The protein belongs to the class-I aminoacyl-tRNA synthetase family. Monomer.

It localises to the cytoplasm. It carries out the reaction tRNA(Arg) + L-arginine + ATP = L-arginyl-tRNA(Arg) + AMP + diphosphate. The protein is Arginine--tRNA ligase of Aliivibrio salmonicida (strain LFI1238) (Vibrio salmonicida (strain LFI1238)).